The primary structure comprises 153 residues: Aspartate carbamoyltransferase regulatory chain (153 aa).

Zn(2+)-binding residues include Cys-109, Cys-114, Cys-138, and Cys-141.

Belongs to the PyrI family. As to quaternary structure, contains catalytic and regulatory chains. Zn(2+) is required as a cofactor.

Functionally, involved in allosteric regulation of aspartate carbamoyltransferase. This is Aspartate carbamoyltransferase regulatory chain from Escherichia coli (strain ATCC 8739 / DSM 1576 / NBRC 3972 / NCIMB 8545 / WDCM 00012 / Crooks).